The chain runs to 334 residues: Aspartate carbamoyltransferase catalytic subunit (334 aa).

Carbamoyl phosphate contacts are provided by Arg71 and Thr72. Lys99 contributes to the L-aspartate binding site. 3 residues coordinate carbamoyl phosphate: Arg121, His151, and Gln154. L-aspartate is bound by residues Arg184 and Arg239. The carbamoyl phosphate site is built by Gly280 and Pro281.

It belongs to the aspartate/ornithine carbamoyltransferase superfamily. ATCase family. In terms of assembly, heterododecamer (2C3:3R2) of six catalytic PyrB chains organized as two trimers (C3), and six regulatory PyrI chains organized as three dimers (R2).

The enzyme catalyses carbamoyl phosphate + L-aspartate = N-carbamoyl-L-aspartate + phosphate + H(+). The protein operates within pyrimidine metabolism; UMP biosynthesis via de novo pathway; (S)-dihydroorotate from bicarbonate: step 2/3. Its function is as follows. Catalyzes the condensation of carbamoyl phosphate and aspartate to form carbamoyl aspartate and inorganic phosphate, the committed step in the de novo pyrimidine nucleotide biosynthesis pathway. The polypeptide is Aspartate carbamoyltransferase catalytic subunit (Pseudomonas syringae pv. tomato (strain ATCC BAA-871 / DC3000)).